A 218-amino-acid polypeptide reads, in one-letter code: Ribose-5-phosphate isomerase A (218 aa).

Substrate-binding positions include T28 to T31, D81 to D84, and K94 to G97. E103 serves as the catalytic Proton acceptor. K121 provides a ligand contact to substrate.

The protein belongs to the ribose 5-phosphate isomerase family. In terms of assembly, homodimer.

The enzyme catalyses aldehydo-D-ribose 5-phosphate = D-ribulose 5-phosphate. The protein operates within carbohydrate degradation; pentose phosphate pathway; D-ribose 5-phosphate from D-ribulose 5-phosphate (non-oxidative stage): step 1/1. Functionally, catalyzes the reversible conversion of ribose-5-phosphate to ribulose 5-phosphate. This chain is Ribose-5-phosphate isomerase A, found in Thioalkalivibrio sulfidiphilus (strain HL-EbGR7).